Here is a 221-residue protein sequence, read N- to C-terminus: MEYLTHSLIDETEALQIVNKLKAEKSSWQDGKKTAGSHAAEIKSNFQLDKNSKLSIELRDVIVNKIISNPLLKSFTLPSLIHGVMFTQSLVGHSYGSHIDNPYMPSGRSDLSFTLFLNAPEDYEGGELCIQTINKTEKIKLSAGEIIIYPSTQLHSVAEVKDGERHVCVGWIQSYVQNNEDRNFLFGLDAGAKGLLAKHGRSDELDLIFQAYSNILRRLGD.

The region spanning Leu80–Ser174 is the Fe2OG dioxygenase domain. Residues His98, Asp100, and His155 each coordinate Fe cation. Arg165 contacts 2-oxoglutarate.

The cofactor is Fe(2+). L-ascorbate is required as a cofactor.

The sequence is that of PKHD-type hydroxylase NATL1_16191 from Prochlorococcus marinus (strain NATL1A).